Consider the following 149-residue polypeptide: Large ribosomal subunit protein bL9 (149 aa).

The protein belongs to the bacterial ribosomal protein bL9 family.

Binds to the 23S rRNA. This chain is Large ribosomal subunit protein bL9, found in Citrobacter koseri (strain ATCC BAA-895 / CDC 4225-83 / SGSC4696).